We begin with the raw amino-acid sequence, 517 residues long: Benzoate 4-monooxygenase bphA (517 aa).

The helical transmembrane segment at 4–24 (LLLSPYGAYLGLALLVLYYLL) threads the bilayer. Asn-282 and Asn-325 each carry an N-linked (GlcNAc...) asparagine glycan. Heme is bound at residue Cys-461.

The protein belongs to the cytochrome P450 family. Heme is required as a cofactor.

The protein localises to the membrane. It catalyses the reaction benzoate + reduced [NADPH--hemoprotein reductase] + O2 = 4-hydroxybenzoate + oxidized [NADPH--hemoprotein reductase] + H2O + H(+). Functionally, cytochrome P450 monooxygenase; part of the benzoic acid degradation pathway also known as the protocatechuic acid pathway. Benzoic acid debradation begins with the conversion of benzoic acid into 4-hydroxybenzoic acid through hydroxylation by the benzoate-4-monooxygenase bphA, and its partner NADPH-cytochrome P450 reductase cprA which act as a mediator in electron donation from NADPH. 4-Hydroxybenzoic acid is then converted into 3,4-dihydroxybenzoic acid (also called protocatechuic acid) by the p-hydroxybenzoate-m-hydroxylase phhA. Protocatechuic acid is converted into 3-carboxy-cis,cis-muconic acid by the intradiol ring-cleavage dioxygenase prcA, which is further metabolized through the 3-oxoadipate pathway to finally enter the tricarboxylic acid cycle (TCA). Its function is as follows. Responsible for cytochrome P450 dependent benzoate hydroxylation in microsomes; requires cprA as the mediator in electron donation from NADPH. The polypeptide is Benzoate 4-monooxygenase bphA (Aspergillus niger).